Here is a 152-residue protein sequence, read N- to C-terminus: Transcriptional regulator MraZ (152 aa).

SpoVT-AbrB domains lie at 5-52 and 81-124; these read ASAI…PLHE and AQDC…EESA.

This sequence belongs to the MraZ family. As to quaternary structure, forms oligomers.

It localises to the cytoplasm. It is found in the nucleoid. This Shewanella frigidimarina (strain NCIMB 400) protein is Transcriptional regulator MraZ.